The primary structure comprises 40 residues: Bomanin Short 6 (40 aa).

The signal sequence occupies residues 1-18; it reads MKLLSITFLFGLLALASA. Residues 19–23 constitute a propeptide, removed by a dipeptidylpeptidase; that stretch reads NPLSP. Residues C32 and C35 are joined by a disulfide bond.

Belongs to the bomanin family.

It is found in the secreted. Functionally, secreted immune-induced peptide induced by Toll signaling. Has a role in resistance to bacterial and fungal infections. The strength of antimicrobial activity appears to correlate with the overall level of expression. This is Bomanin Short 6 from Drosophila melanogaster (Fruit fly).